Here is a 152-residue protein sequence, read N- to C-terminus: uncharacterized protein (152 aa).

Residues 3–143 (EQKLCQAINL…IIEIFTILKS (141 aa)) enclose the HTH marR-type domain. The H-T-H motif DNA-binding region spans 55–78 (PGSLAMYQNVHKSAISNRLKKLLE).

This is an uncharacterized protein from Bacillus subtilis (strain 168).